The sequence spans 312 residues: Olfactory receptor 2L5 (312 aa).

Topologically, residues M1–L24 are extracellular. N5 is a glycosylation site (N-linked (GlcNAc...) asparagine). The helical transmembrane segment at F25–I48 threads the bilayer. At F49–T56 the chain is on the cytoplasmic side. The chain crosses the membrane as a helical span at residues P57–P78. The Extracellular segment spans residues K79–Q99. C96 and C188 are joined by a disulfide. The helical transmembrane segment at S100–Y119 threads the bilayer. The Cytoplasmic segment spans residues D120–R138. Residues M139–A157 form a helical membrane-spanning segment. At H158 to Y194 the chain is on the extracellular side. A helical membrane pass occupies residues E195–G218. Residues W219–K235 lie on the Cytoplasmic side of the membrane. A helical membrane pass occupies residues A236 to Y258. Over L259–K271 the chain is Extracellular. A helical membrane pass occupies residues V272 to L291. At R292–M312 the chain is on the cytoplasmic side.

This sequence belongs to the G-protein coupled receptor 1 family.

The protein resides in the cell membrane. Odorant receptor. In Homo sapiens (Human), this protein is Olfactory receptor 2L5 (OR2L5).